We begin with the raw amino-acid sequence, 493 residues long: Serine/threonine-protein kinase PBL34 (493 aa).

2 disordered regions span residues 1-42 and 84-117; these read MGLD…EEEE and SKSA…TPVI. G2 carries N-myristoyl glycine lipidation. Residues 12 to 37 are compositionally biased toward basic and acidic residues; that stretch reads WKSEKPKETENKNHKKKNGDDNKSRN. Residues 100 to 114 show a composition bias toward low complexity; sequence SSTTTTSNAESSSST. Residue T131 is modified to Phosphothreonine. The Protein kinase domain occupies 142-428; the sequence is FRPESLLGEG…VEALKPLPHL (287 aa). ATP-binding positions include 148 to 156 and K180; that span reads LGEGGFGCV. Y225 bears the Phosphotyrosine mark. D275 (proton acceptor) is an active-site residue. S279 carries the post-translational modification Phosphoserine. The residue at position 306 (T306) is a Phosphothreonine. S309 carries the post-translational modification Phosphoserine. 2 positions are modified to phosphothreonine: T310 and T315. Position 323 is a phosphotyrosine (Y323). Positions 447–493 are disordered; the sequence is KNGSGRSQGFGSRNGQHQPVFRTLSSPHGSSPYRHQIPSPKPKGATT. Over residues 450-475 the composition is skewed to polar residues; that stretch reads SGRSQGFGSRNGQHQPVFRTLSSPHG.

Belongs to the protein kinase superfamily. Ser/Thr protein kinase family. In terms of assembly, interacts with the Xanthomonas campestris effector XopAC/AvrAC. Interacts with SD129. Post-translationally, phosphorylated by SD129 at Thr-306 and Thr-310 in response to the pathogen-associated molecular pattern (PAMP) 3-OH-C10:0, a medium-chain 3-hydroxy fatty acid.

The protein localises to the cell membrane. It catalyses the reaction L-seryl-[protein] + ATP = O-phospho-L-seryl-[protein] + ADP + H(+). It carries out the reaction L-threonyl-[protein] + ATP = O-phospho-L-threonyl-[protein] + ADP + H(+). Involved in chitin-triggered immune signaling and is required for reactive oxygen species (ROS) production. Acts downstream of SD129 in defense signaling triggered by the pathogen-associated molecular pattern (PAMP) 3-OH-C10:0, a medium-chain 3-hydroxy fatty acid. This is Serine/threonine-protein kinase PBL34 from Arabidopsis thaliana (Mouse-ear cress).